We begin with the raw amino-acid sequence, 633 residues long: Guanylate-binding protein 6 (633 aa).

The segment at 1 to 310 (MESGPKMLAP…EAINSGAVPC (310 aa)) is GTPase domain (Globular). The 243-residue stretch at 35–277 (SQPVVVVAIV…FCSYIFTHAR (243 aa)) folds into the GB1/RHD3-type G domain. GTP contacts are provided by residues 45–52 (GLYRTGKS), 67–69 (LGS), and 97–101 (DTEGL).

It belongs to the TRAFAC class dynamin-like GTPase superfamily. GB1/RHD3 GTPase family. GB1 subfamily. In terms of processing, (Microbial infection) Ubiquitinated by S.flexneri IpaH9.8, leading to its degradation by the proteasome, thereby preventing its ability to promote host defense against bacterial infection.

The protein resides in the cytoplasmic vesicle. It carries out the reaction GTP + H2O = GDP + phosphate + H(+). Functionally, interferon (IFN)-inducible GTPase that plays important roles in innate immunity against a diverse range of bacterial, viral and protozoan pathogens, such as bacterial pathogens Listeria monocytogenes and Mycobacterium bovis BCG as well as the protozoan pathogen Toxoplasma gondii. Confers protection to several pathogens, including the bacterial pathogens Listeria monocytogenes and Mycobacterium bovis BCG as well as the protozoan pathogen Toxoplasma gondii. This chain is Guanylate-binding protein 6 (GBP6), found in Homo sapiens (Human).